The chain runs to 274 residues: NAD(P)H dehydrogenase [quinone] 1 (274 aa).

Residue A2 is modified to N-acetylalanine. FAD contacts are provided by residues H12, 18–19 (FN), and Q67. S82 bears the Phosphoserine mark. 104-107 (LYWF) is an FAD binding site. 126-128 (AYT) is a substrate binding site. Residues 148–151 (TTGG), Y156, and R201 each bind FAD. The segment at 225–274 (PSSLFDLNFQAGFLLKKEVQEEQKKNKFGLSVGHHLGKSIPADNQIKARK) is important for apoenzyme conformational stability. A Glycyl lysine isopeptide (Lys-Gly) (interchain with G-Cter in SUMO2) cross-link involves residue K251.

Belongs to the NAD(P)H dehydrogenase (quinone) family. As to quaternary structure, homodimer. Interacts with PDLIM4 isoform 2; this interaction stabilizes PDLIM4 isoform 2 in response to oxidative stress and protects it from ubiquitin-independent degradation by the core 20S proteasome. Interacts with TP73 (via SAM domain); this interaction is NADH-dependent, stabilizes TP73 in response to oxidative stress and protects it from ubiquitin-independent degradation by the 20S proteasome. Interacts with TP53; this interaction is NADH-dependent, stabilizes TP53 in response to oxidative stress and protects it from ubiquitin-independent degradation by the 20S proteasome. The cofactor is FAD.

It localises to the cytoplasm. The protein localises to the cytosol. The catalysed reaction is a quinone + NADH + H(+) = a quinol + NAD(+). It catalyses the reaction a quinone + NADPH + H(+) = a quinol + NADP(+). The enzyme catalyses ubiquinone-10 + NADH + H(+) = ubiquinol-10 + NAD(+). It carries out the reaction menadione + NADH + H(+) = menadiol + NAD(+). Its function is as follows. Flavin-containing quinone reductase that catalyzes two-electron reduction of quinones to hydroquinones using either NADH or NADPH as electron donors. In a ping-pong kinetic mechanism, the electrons are sequentially transferred from NAD(P)H to flavin cofactor and then from reduced flavin to the quinone, bypassing the formation of semiquinone and reactive oxygen species. Regulates cellular redox state primarily through quinone detoxification. Reduces components of plasma membrane redox system such as coenzyme Q and vitamin quinones, producing antioxidant hydroquinone forms. In the process may function as superoxide scavenger to prevent hydroquinone oxidation and facilitate excretion. Alternatively, can activate quinones and their derivatives by generating redox reactive hydroquinones with DNA cross-linking antitumor potential. Acts as a gatekeeper of the core 20S proteasome known to degrade proteins with unstructured regions. Upon oxidative stress, interacts with tumor suppressors TP53 and TP73 in a NADH-dependent way and inhibits their ubiquitin-independent degradation by the 20S proteasome. The sequence is that of NAD(P)H dehydrogenase [quinone] 1 (Nqo1) from Rattus norvegicus (Rat).